The following is an 88-amino-acid chain: Small ribosomal subunit protein uS15 (88 aa).

Over residues 1 to 20 (MLATEKKQELIDQYKRHEGD) the composition is skewed to basic and acidic residues. Residues 1 to 21 (MLATEKKQELIDQYKRHEGDT) form a disordered region.

The protein belongs to the universal ribosomal protein uS15 family. Part of the 30S ribosomal subunit. Forms a bridge to the 50S subunit in the 70S ribosome, contacting the 23S rRNA.

In terms of biological role, one of the primary rRNA binding proteins, it binds directly to 16S rRNA where it helps nucleate assembly of the platform of the 30S subunit by binding and bridging several RNA helices of the 16S rRNA. Functionally, forms an intersubunit bridge (bridge B4) with the 23S rRNA of the 50S subunit in the ribosome. This Syntrophotalea carbinolica (strain DSM 2380 / NBRC 103641 / GraBd1) (Pelobacter carbinolicus) protein is Small ribosomal subunit protein uS15.